The sequence spans 567 residues: MSKPTADNAPNAAAKGAPAVPANFLRPIIQADLDSGKHSSIVTRFPPEPNGYLHIGHAKSICVNFGLAKEFGGVCHLRFDDTNPAKEDQEYIDAIQSDVKWLGFEWGGDVRYASDYFDQLHDWAVELIKRGKAYVCDLTPEQAKEYRGNLKEPGKNSPFRERSVEENLDLFARMKAGEFKDGERVLRAKIDMASPNMNLRDPILYRIRHAHHHQTGDKWCIYPNYDFTHGQSDAIEGITHSICTLEFEGHRPLYDWFLDNLPVPAHPRQYEFSRLNLNYTITSKRKLKQLVDEKHVDAWDDPRMSTLSGFRRRGYTPASIRNFCEMIGTNRSDGVVDMSMLEFSIRDDLDRTAPRAMCVLRPLKVVITNYPEGQVEQLELPRHPKEDMGVRVLPFSRELYIDRDDFMEEPPKGYKRLEPAGEVRLRGSYVIRADEAIKDADGNIVELRCSYDPDTLGKNPEGRKVKGVIHWVPAEGSVECEVRLYDRLFRSPNPEKTEEGGSFLDNINPASLQVLSGCRAEPSLAQAQPEDRFQFEREGYFCADLKDSQPGRPVFNRTVTLRDSWGS.

Positions 47 to 57 (PEPNGYLHIGH) match the 'HIGH' region motif. ATP is bound by residues 48–50 (EPN) and 54–60 (HIGHAKS). The L-glutamine site is built by D80 and Y225. Residues T244 and 274-275 (RL) contribute to the ATP site. The short motif at 281-285 (ITSKR) is the 'KMSKS' region element.

The protein belongs to the class-I aminoacyl-tRNA synthetase family. As to quaternary structure, monomer.

The protein localises to the cytoplasm. It catalyses the reaction tRNA(Gln) + L-glutamine + ATP = L-glutaminyl-tRNA(Gln) + AMP + diphosphate. The sequence is that of Glutamine--tRNA ligase from Pseudomonas putida (strain ATCC 47054 / DSM 6125 / CFBP 8728 / NCIMB 11950 / KT2440).